Reading from the N-terminus, the 180-residue chain is Transcriptional repressor NrdR (180 aa).

Residues 3–34 (CPYCQNTSSRVLESRSTEAGQSIRRRRECLQC) fold into a zinc finger. Positions 49–139 (ISVLKKDKSK…VYGEFKGITD (91 aa)) constitute an ATP-cone domain. The interval 148–180 (QQEERESSSSPEWSDAGEEATVIEDSSQVMASS) is disordered. A compositionally biased stretch (polar residues) spans 171-180 (EDSSQVMASS).

It belongs to the NrdR family. The cofactor is Zn(2+).

Negatively regulates transcription of bacterial ribonucleotide reductase nrd genes and operons by binding to NrdR-boxes. In Gloeothece citriformis (strain PCC 7424) (Cyanothece sp. (strain PCC 7424)), this protein is Transcriptional repressor NrdR.